Consider the following 151-residue polypeptide: UPF0208 membrane protein YE1335 (151 aa).

The next 2 helical transmembrane spans lie at 46-66 (FGIR…IALG) and 69-89 (LGPA…GLWW).

It belongs to the UPF0208 family.

Its subcellular location is the cell inner membrane. The polypeptide is UPF0208 membrane protein YE1335 (Yersinia enterocolitica serotype O:8 / biotype 1B (strain NCTC 13174 / 8081)).